We begin with the raw amino-acid sequence, 84 residues long: Turripeptide IX-03 (84 aa).

The first 21 residues, 1 to 21 (MGFYMLLTVALLLTSLMNVEA), serve as a signal peptide directing secretion. The propeptide occupies 22-39 (TPVDQAERSALEKSGLGN). 3 disulfide bridges follow: Cys-48/Cys-70, Cys-55/Cys-74, and Cys-60/Cys-81.

As to expression, expressed by the venom duct.

It localises to the secreted. This is Turripeptide IX-03 from Gemmula speciosa (Splendid gem-turris).